The chain runs to 259 residues: 3-methyl-2-oxobutanoate hydroxymethyltransferase (259 aa).

Residues D44 and D83 each contribute to the Mg(2+) site. Residues 44–45 (DS), D83, and K112 contribute to the 3-methyl-2-oxobutanoate site. E114 lines the Mg(2+) pocket. The active-site Proton acceptor is the E177.

Belongs to the PanB family. In terms of assembly, homodecamer; pentamer of dimers. The cofactor is Mg(2+).

Its subcellular location is the cytoplasm. It carries out the reaction 3-methyl-2-oxobutanoate + (6R)-5,10-methylene-5,6,7,8-tetrahydrofolate + H2O = 2-dehydropantoate + (6S)-5,6,7,8-tetrahydrofolate. It participates in cofactor biosynthesis; (R)-pantothenate biosynthesis; (R)-pantoate from 3-methyl-2-oxobutanoate: step 1/2. Its function is as follows. Catalyzes the reversible reaction in which hydroxymethyl group from 5,10-methylenetetrahydrofolate is transferred onto alpha-ketoisovalerate to form ketopantoate. This Nitratiruptor sp. (strain SB155-2) protein is 3-methyl-2-oxobutanoate hydroxymethyltransferase.